The following is a 654-amino-acid chain: Fructose-1,6-bisphosphatase class 3 (654 aa).

The segment at 288-307 (NPAFKPKKRPDKHERLTQRE) is disordered. A compositionally biased stretch (basic and acidic residues) spans 298–307 (DKHERLTQRE).

This sequence belongs to the FBPase class 3 family. Requires Mn(2+) as cofactor.

The catalysed reaction is beta-D-fructose 1,6-bisphosphate + H2O = beta-D-fructose 6-phosphate + phosphate. It participates in carbohydrate biosynthesis; gluconeogenesis. The chain is Fructose-1,6-bisphosphatase class 3 from Staphylococcus aureus (strain Mu3 / ATCC 700698).